The following is a 687-amino-acid chain: Probable intron-encoded endonuclease aI3 (687 aa).

The tract at residues Met1 to Asp374 is COX1 exons 1 to 3 encoded. Helical transmembrane passes span Ile19 to Val39, Leu69 to Leu89, Leu103 to Leu123, Ala152 to Val172, Pro188 to Leu208, Leu240 to Met260, Phe273 to Trp293, Met315 to Gly335, Val341 to Val361, and Ile376 to Thr396. The interval Arg375–Lys687 is COX1 intron 3 encoded.

This sequence in the C-terminal section; belongs to the LAGLIDADG endonuclease family. It in the N-terminal section; belongs to the heme-copper respiratory oxidase family. Post-translationally, the mature protein may arise from proteolytic cleavage of an in-frame translation of COX1 exons 1 to 3 plus intron 3, containing the aI3 open reading frame.

It localises to the mitochondrion. Its subcellular location is the membrane. In terms of biological role, mitochondrial DNA endonuclease involved in intron homing. The chain is Probable intron-encoded endonuclease aI3 (aI3) from Debaryomyces hansenii (strain ATCC 36239 / CBS 767 / BCRC 21394 / JCM 1990 / NBRC 0083 / IGC 2968) (Yeast).